The chain runs to 129 residues: Ribosome-binding factor A (129 aa).

The protein belongs to the RbfA family. In terms of assembly, monomer. Binds 30S ribosomal subunits, but not 50S ribosomal subunits or 70S ribosomes.

The protein resides in the cytoplasm. Functionally, one of several proteins that assist in the late maturation steps of the functional core of the 30S ribosomal subunit. Associates with free 30S ribosomal subunits (but not with 30S subunits that are part of 70S ribosomes or polysomes). Required for efficient processing of 16S rRNA. May interact with the 5'-terminal helix region of 16S rRNA. This chain is Ribosome-binding factor A, found in Marinomonas sp. (strain MWYL1).